A 252-amino-acid polypeptide reads, in one-letter code: Thiazole synthase (252 aa).

K91 acts as the Schiff-base intermediate with DXP in catalysis. 1-deoxy-D-xylulose 5-phosphate is bound by residues G152, 179–180 (AG), and 201–202 (NT).

The protein belongs to the ThiG family. As to quaternary structure, homotetramer. Forms heterodimers with either ThiH or ThiS.

The protein resides in the cytoplasm. The catalysed reaction is [ThiS sulfur-carrier protein]-C-terminal-Gly-aminoethanethioate + 2-iminoacetate + 1-deoxy-D-xylulose 5-phosphate = [ThiS sulfur-carrier protein]-C-terminal Gly-Gly + 2-[(2R,5Z)-2-carboxy-4-methylthiazol-5(2H)-ylidene]ethyl phosphate + 2 H2O + H(+). The protein operates within cofactor biosynthesis; thiamine diphosphate biosynthesis. Functionally, catalyzes the rearrangement of 1-deoxy-D-xylulose 5-phosphate (DXP) to produce the thiazole phosphate moiety of thiamine. Sulfur is provided by the thiocarboxylate moiety of the carrier protein ThiS. In vitro, sulfur can be provided by H(2)S. This Gluconobacter oxydans (strain 621H) (Gluconobacter suboxydans) protein is Thiazole synthase.